Reading from the N-terminus, the 193-residue chain is Thymidylate kinase (193 aa).

An ATP-binding site is contributed by 7 to 14 (GIDGCGKS).

It belongs to the thymidylate kinase family.

It catalyses the reaction dTMP + ATP = dTDP + ADP. Functionally, phosphorylation of dTMP to form dTDP in both de novo and salvage pathways of dTTP synthesis. The polypeptide is Thymidylate kinase (Coprothermobacter proteolyticus (strain ATCC 35245 / DSM 5265 / OCM 4 / BT)).